We begin with the raw amino-acid sequence, 1469 residues long: Actin cytoskeleton-regulatory complex protein pan1 (1469 aa).

The segment at 1 to 163 (MYSSSNSFLG…PPPKSSGSKI (163 aa)) is disordered. Low complexity predominate over residues 17-52 (PGQQPPFMQQQQQPSYSQFPPGQQQQPQPTGFAPQP). Residues 54 to 83 (GYAQPQLSSFGSQLQPQPTGFPSGQLQPQF) are compositionally biased toward polar residues. Low complexity predominate over residues 85-124 (GFPGAAPQQSQQPQPTGFQPQQPQFTGYPPQSQPPQLQVP). The EH 1 domain occupies 175-263 (DQAKFEQLFK…ETIKNEVSSM (89 aa)). Residues 207 to 242 (LSGSDLSKIWVLSDSTKSGQLFFPEFALAMYLCNLR) form the EF-hand 1 domain. Disordered regions lie at residues 276 to 311 (PEPV…QPTN) and 323 to 409 (TGFL…LVAQ). The span at 298–307 (PPAPQQPQPQ) shows a compositional bias: pro residues. Residues 323 to 346 (TGFLSQPTGLSPNQAPFGQQSNLA) are compositionally biased toward polar residues. Low complexity predominate over residues 347–366 (PQPTGLPGQPQQQSLQPQPT). A compositionally biased stretch (polar residues) spans 391 to 401 (YASNLSPSQTG). Residues 466-555 (EKKIYDDLFR…PELIPPSTRN (90 aa)) enclose the EH 2 domain. The region spanning 499-534 (LNRQDLERIWTLADPNNRGRLNMDEFAVAMHLIYRK) is the EF-hand 2 domain. Disordered stretches follow at residues 619–650 (AAAG…SEDE), 801–845 (AAEL…RDVE), and 898–1469 (TAHI…RVLD). A compositionally biased stretch (polar residues) spans 634–646 (NGRTPSPAASSQA). Residues 641–767 (AASSQASEDE…LFRLKDAKAH (127 aa)) adopt a coiled-coil conformation. The span at 818–845 (AAARRLESESANVKADREKNDAMTRDVE) shows a compositional bias: basic and acidic residues. Low complexity-rich tracts occupy residues 908 to 917 (RASPSQSQQS) and 933 to 942 (TGSTGSLPGT). 5 stretches are compositionally biased toward basic and acidic residues: residues 943 to 961 (THED…RIAE), 981 to 1016 (RQER…EERG), 1039 to 1106 (ARTD…RLRA), 1117 to 1137 (KKQE…EQEA), and 1144 to 1161 (AELE…RELE). Residues 973 to 1172 (EASETLVQRQ…MEEESSSDDE (200 aa)) are a coiled coil. The span at 1162–1174 (AMEEESSSDDEGP) shows a compositional bias: acidic residues. Residues 1193–1209 (EAPPPPPPAPATAPPVP) show a composition bias toward pro residues. The segment covering 1210–1227 (AIAEPEAPTSPATSPASS) has biased composition (low complexity). The segment covering 1264 to 1284 (SDTHSTNPFHRLAQQQESTAP) has biased composition (polar residues). A compositionally biased stretch (low complexity) spans 1368-1378 (PEADAAPSAPV). 2 stretches are compositionally biased toward pro residues: residues 1379-1391 (AAPP…PVPA) and 1400-1430 (APPP…PPAA). The WH2 domain occupies 1436–1453 (DRGALLASIQAGKGLRKV). Residues 1456-1469 (NDRSTSSTAGRVLD) show a composition bias toward polar residues.

This sequence belongs to the PAN1 family. As to quaternary structure, component of the PAN1 actin cytoskeleton-regulatory complex.

Its subcellular location is the cell membrane. It localises to the endosome membrane. It is found in the cytoplasm. The protein resides in the cytoskeleton. The protein localises to the actin patch. Its function is as follows. Component of the PAN1 actin cytoskeleton-regulatory complex required for the internalization of endosomes during actin-coupled endocytosis. The complex links the site of endocytosis to the cell membrane-associated actin cytoskeleton. Mediates uptake of external molecules and vacuolar degradation of plasma membrane proteins. Plays a role in the proper organization of the cell membrane-associated actin cytoskeleton and promotes its destabilization. The protein is Actin cytoskeleton-regulatory complex protein pan1 (pan1) of Aspergillus terreus (strain NIH 2624 / FGSC A1156).